Reading from the N-terminus, the 221-residue chain is Octanoyltransferase (221 aa).

The region spanning 35–221 is the BPL/LPL catalytic domain; sequence ESYENRIIFC…RELLAALLSK (187 aa). Residues 80–87, 152–154, and 165–167 each bind substrate; these read RGGDITYH, AIG, and GLA. Residue C183 is the Acyl-thioester intermediate of the active site.

It belongs to the LipB family.

The protein localises to the cytoplasm. The catalysed reaction is octanoyl-[ACP] + L-lysyl-[protein] = N(6)-octanoyl-L-lysyl-[protein] + holo-[ACP] + H(+). The protein operates within protein modification; protein lipoylation via endogenous pathway; protein N(6)-(lipoyl)lysine from octanoyl-[acyl-carrier-protein]: step 1/2. Its function is as follows. Catalyzes the transfer of endogenously produced octanoic acid from octanoyl-acyl-carrier-protein onto the lipoyl domains of lipoate-dependent enzymes. Lipoyl-ACP can also act as a substrate although octanoyl-ACP is likely to be the physiological substrate. This chain is Octanoyltransferase, found in Bacteroides fragilis (strain ATCC 25285 / DSM 2151 / CCUG 4856 / JCM 11019 / LMG 10263 / NCTC 9343 / Onslow / VPI 2553 / EN-2).